Here is a 285-residue protein sequence, read N- to C-terminus: Phosphatidate cytidylyltransferase (285 aa).

The next 8 helical transmembrane spans lie at 10-30, 56-76, 93-113, 121-141, 151-171, 190-210, 213-233, and 264-284; these read FVLI…GFAI, VWLA…LPEY, LGWW…AAIW, LIFG…LRAW, AIWL…AYMF, WQGF…YGMW, LDVA…ASVL, and IDSL…VFRT.

The protein belongs to the CDS family.

It is found in the cell inner membrane. The enzyme catalyses a 1,2-diacyl-sn-glycero-3-phosphate + CTP + H(+) = a CDP-1,2-diacyl-sn-glycerol + diphosphate. The protein operates within phospholipid metabolism; CDP-diacylglycerol biosynthesis; CDP-diacylglycerol from sn-glycerol 3-phosphate: step 3/3. The polypeptide is Phosphatidate cytidylyltransferase (cdsA) (Escherichia coli O157:H7).